The following is a 525-amino-acid chain: Polyamine aminopropyltransferase 1 (525 aa).

The next 6 helical transmembrane spans lie at 21–41 (ALLVLAVFVVASCGLAYELIA), 53–73 (ILQFSSIIGAYLFAMGIGSWV), 89–109 (LELLVGLFGGVSAAALFLLFA), 117–137 (LVLYALVTVIGVLVGMEIPLV), 155–175 (VLTFDYLGALAVSLLFPLVLA), and 180–200 (LVRTGFLFGLCNTAIAVWTLW). One can recognise a PABS domain in the interval 220–464 (AGMVGAALLA…GEWGFILAAP (245 aa)). Residues 222–471 (MVGAALLAGF…AAPGRADFRP (250 aa)) are spermidine synthase. Gln259 provides a ligand contact to S-methyl-5'-thioadenosine. Residues His289 and Asp313 each contribute to the spermidine site. Residues Asp333 and 367-368 (DA) each bind S-methyl-5'-thioadenosine. The active-site Proton acceptor is Asp385.

It belongs to the spermidine/spermine synthase family. As to quaternary structure, homodimer or homotetramer.

It is found in the cell membrane. It carries out the reaction S-adenosyl 3-(methylsulfanyl)propylamine + putrescine = S-methyl-5'-thioadenosine + spermidine + H(+). The protein operates within amine and polyamine biosynthesis; spermidine biosynthesis; spermidine from putrescine: step 1/1. Catalyzes the irreversible transfer of a propylamine group from the amino donor S-adenosylmethioninamine (decarboxy-AdoMet) to putrescine (1,4-diaminobutane) to yield spermidine. The polypeptide is Polyamine aminopropyltransferase 1 (Ralstonia nicotianae (strain ATCC BAA-1114 / GMI1000) (Ralstonia solanacearum)).